Consider the following 843-residue polypeptide: N-acetyltransferase ESCO1 (843 aa).

The disordered stretch occupies residues 1–78; that stretch reads MSIQEKSKEN…SASCSADKTA (78 aa). The span at 18 to 28 shows a compositional bias: acidic residues; it reads SEDENLEEEVE. The span at 66 to 78 shows a compositional bias: polar residues; it reads STRSASCSADKTA. Ser-202 carries the post-translational modification Phosphoserine. The interval 262–300 is disordered; the sequence is NELRKSAHTQVSTSTKRPQIPLPLVPEHSDDQELEQAGK. Polar residues predominate over residues 269–278; the sequence is HTQVSTSTKR. Lys-335 participates in a covalent cross-link: Glycyl lysine isopeptide (Lys-Gly) (interchain with G-Cter in SUMO2). A Phosphoserine modification is found at Ser-415. The segment at 546–584 is disordered; it reads DRTFPGSAPNQQHSVLSDEASINRKNRDVPPNHSQLKHD. Residues 566 to 584 are compositionally biased toward basic and acidic residues; the sequence is SINRKNRDVPPNHSQLKHD. The segment at 620-644 adopts a CCHH-type zinc-finger fold; sequence VSCNICGMLYTASNPEDETQHLLFH. Acetyl-CoA contacts are provided by residues 775-777, 783-788, and 815-817; these read IWV, RKKIAS, and TPD.

The protein belongs to the acetyltransferase family. ECO subfamily. In terms of assembly, the subunit structure is controversial. Monomer. Homodimer. Post-translationally, phosphorylated during mitosis.

It localises to the nucleus. Its subcellular location is the chromosome. It catalyses the reaction L-lysyl-[protein] + acetyl-CoA = N(6)-acetyl-L-lysyl-[protein] + CoA + H(+). Acetyltransferase required for the establishment of sister chromatid cohesion. Couples the processes of cohesion and DNA replication to ensure that only sister chromatids become paired together. In contrast to the structural cohesins, the deposition and establishment factors are required only during S phase. Acts by mediating the acetylation of cohesin component SMC3. The protein is N-acetyltransferase ESCO1 (Esco1) of Mus musculus (Mouse).